A 511-amino-acid polypeptide reads, in one-letter code: MAETSRELPLSTLTASTRRALRIRARQAREAKLSVLSKVCYAIGGAPNQVSGSASAFFLQIYLLDVALISPYQASLVLSLGKTWGGITDPIVGYCISKSKWTRIGRLMPWMLGCTPFLVVSYFLLWFVPTFETGRVLWYLAFFSCFQALSTAYHVPYTTLTMFLSTDQMERDSATAYRMTVEVLGTLIGAAVQGQIVASAHTGSHCNVTNMTGNLTADFLYEPTEYITSARQVYMIAAGIIGCLYLLCISVLFLGVKERDDPYALVAGKVIPFFKGFRETMQFGPYLNLISSFLLISAAVQIQQSNFVLFCTHAADLQDHFQNLVLTILIAAVLSIPFWQWFLQKFGKKMAAFGISLMIPFSIMLVTISSLVVAYVVAVASGLSIAASLLLPWSMLPDVVDNFRLTNPQGKGLEAIFYSSFVFFTKLSAGIALGISTLSLQFADYNTSLCKQSYSVVLTLKLLIGAAPALMIIIGLTILAFYPITEDTRKETELALDVIRMRTRRSTLIVI.

9 helical membrane-spanning segments follow: residues 108–128 (MPWMLGCTPFLVVSYFLLWFV), 136–156 (VLWYLAFFSCFQALSTAYHVP), 236–256 (IAAGIIGCLYLLCISVLFLGV), 280–300 (TMQFGPYLNLISSFLLISAAV), 323–343 (NLVLTILIAAVLSIPFWQWFL), 357–377 (LMIPFSIMLVTISSLVVAYVV), 379–399 (VASGLSIAASLLLPWSMLPDV), 415–435 (AIFYSSFVFFTKLSAGIALGI), and 462–482 (LLIGAAPALMIIIGLTILAFY).

Belongs to the major facilitator superfamily.

Its subcellular location is the cell membrane. The catalysed reaction is sphing-4-enine 1-phosphate(in) = sphing-4-enine 1-phosphate(out). It catalyses the reaction sphinganine 1-phosphate(in) = sphinganine 1-phosphate(out). It carries out the reaction sphinga-4E,14Z-dienine-1-phosphate(in) = sphinga-4E,14Z-dienine-1-phosphate(out). Functionally, lipid transporter that specifically mediates export of sphingosine-1-phosphate in red blood cells and platelets. Sphingosine-1-phosphate is a signaling sphingolipid and its export from red blood cells into in the plasma is required for red blood cell morphology. Sphingosine-1-phosphate export from platelets is required for platelet aggregation and thrombus formation. In addition to export, also able to mediate S1P import. This is Sphingosine-1-phosphate transporter MFSD2B from Xenopus tropicalis (Western clawed frog).